We begin with the raw amino-acid sequence, 549 residues long: Ankyrin repeat domain-containing protein SOWAHA (549 aa).

An N-terminal signal peptide occupies residues 1-17 (MALAAAAAAAAAGVSQA). 2 disordered regions span residues 82–219 (KPRP…PCML) and 235–256 (EEPG…PLLL). The span at 203–216 (PGPGAAKGPPQQKP) shows a compositional bias: low complexity. Residues 235–248 (EEPGLRRQLSEEPS) are compositionally biased toward basic and acidic residues. Serine 260 bears the Phosphoserine mark. 2 ANK repeats span residues 345–374 (SGFT…RSGA) and 384–414 (GGYT…QVHV). The disordered stretch occupies residues 513 to 549 (PRKKTKIRGGLPAFSEISRRPTPGPLAGLVPSLPPTT).

This sequence belongs to the SOWAH family.

In Homo sapiens (Human), this protein is Ankyrin repeat domain-containing protein SOWAHA (SOWAHA).